The chain runs to 278 residues: Type II restriction enzyme NgoPII (278 aa).

The protein belongs to the NgoPII type II restriction endonuclease family.

It carries out the reaction Endonucleolytic cleavage of DNA to give specific double-stranded fragments with terminal 5'-phosphates.. In terms of biological role, a P subtype restriction enzyme that recognizes the double-stranded sequence 5'-GGCC-3' and cleaves after G-2. In Neisseria gonorrhoeae, this protein is Type II restriction enzyme NgoPII (ngoPIIR).